Here is a 129-residue protein sequence, read N- to C-terminus: Glycine cleavage system H protein (129 aa).

Residues 24–106 (SYTVGISEHA…FGDGWFFRVM (83 aa)) enclose the Lipoyl-binding domain. Lys-65 is subject to N6-lipoyllysine.

It belongs to the GcvH family. The glycine cleavage system is composed of four proteins: P, T, L and H. It depends on (R)-lipoate as a cofactor.

Its function is as follows. The glycine cleavage system catalyzes the degradation of glycine. The H protein shuttles the methylamine group of glycine from the P protein to the T protein. The polypeptide is Glycine cleavage system H protein (Shewanella halifaxensis (strain HAW-EB4)).